A 1331-amino-acid polypeptide reads, in one-letter code: uncharacterized protein (1331 aa).

The next 8 membrane-spanning stretches (helical) occupy residues 373–393 (VIGV…SLIV), 487–507 (ALFL…LILI), 534–554 (LLIF…SFGI), 579–599 (VVGL…ISLL), 653–673 (LVFL…SFAT), 1206–1226 (VIAV…TTLI), 1255–1275 (IPLF…LIAL), and 1297–1317 (AIGS…LNWL).

This sequence belongs to the ABC-4 integral membrane protein family.

The protein resides in the cell membrane. This is an uncharacterized protein from Mycoplasma genitalium (strain ATCC 33530 / DSM 19775 / NCTC 10195 / G37) (Mycoplasmoides genitalium).